Reading from the N-terminus, the 398-residue chain is Small ribosomal subunit protein uS3m (398 aa).

It belongs to the universal ribosomal protein uS3 family. In terms of assembly, component of the mitochondrial small ribosomal subunit (mt-SSU). Mature yeast 74S mitochondrial ribosomes consist of a small (37S) and a large (54S) subunit. The 37S small subunit contains a 15S ribosomal RNA (15S mt-rRNA) and 34 different proteins. The 54S large subunit contains a 21S rRNA (21S mt-rRNA) and 46 different proteins. uS3m, uS4m and uS5m form the narrow entry site of the mRNA channel.

It is found in the mitochondrion. In terms of biological role, component of the mitochondrial ribosome (mitoribosome), a dedicated translation machinery responsible for the synthesis of mitochondrial genome-encoded proteins, including at least some of the essential transmembrane subunits of the mitochondrial respiratory chain. The mitoribosomes are attached to the mitochondrial inner membrane and translation products are cotranslationally integrated into the membrane. uS3m is essential for mitochondrial protein synthesis and required for the maturation of small ribosomal subunits. This chain is Small ribosomal subunit protein uS3m (VAR1), found in Saccharomyces cerevisiae (strain ATCC 204508 / S288c) (Baker's yeast).